Consider the following 229-residue polypeptide: ATP synthase subunit a (229 aa).

A run of 6 helical transmembrane segments spans residues 14–34 (LIAITNSSMMMMLAVAVALIL), 68–88 (YFPFVFTLFIFIVFLNILGLF), 98–118 (IVVTLGLSFSIVIGVTLGGLW), 124–144 (FLSILMPAGAPLALAPLLVLI), 157–179 (GVRLAANLSAGHLLFAILAGFGF), and 189–209 (NIFPVLIMVFISLLEAAVAVI).

Belongs to the ATPase A chain family. F-type ATPases have 2 components, CF(1) - the catalytic core - and CF(0) - the membrane proton channel. CF(1) has five subunits: alpha(3), beta(3), gamma(1), delta(1), epsilon(1). CF(0) has three main subunits: a, b and c.

It is found in the mitochondrion inner membrane. Functionally, mitochondrial membrane ATP synthase (F(1)F(0) ATP synthase or Complex V) produces ATP from ADP in the presence of a proton gradient across the membrane which is generated by electron transport complexes of the respiratory chain. F-type ATPases consist of two structural domains, F(1) - containing the extramembraneous catalytic core and F(0) - containing the membrane proton channel, linked together by a central stalk and a peripheral stalk. During catalysis, ATP synthesis in the catalytic domain of F(1) is coupled via a rotary mechanism of the central stalk subunits to proton translocation. Key component of the proton channel; it may play a direct role in the translocation of protons across the membrane. This is ATP synthase subunit a (ATPASE6) from Metridium senile (Brown sea anemone).